A 183-amino-acid chain; its full sequence is tRNA-splicing endonuclease (183 aa).

Catalysis depends on residues Y120, H128, and K159.

It belongs to the tRNA-intron endonuclease family. Archaeal short subfamily. As to quaternary structure, homotetramer; although the tetramer contains four active sites, only two participate in the cleavage. Therefore, it should be considered as a dimer of dimers.

It carries out the reaction pretRNA = a 3'-half-tRNA molecule with a 5'-OH end + a 5'-half-tRNA molecule with a 2',3'-cyclic phosphate end + an intron with a 2',3'-cyclic phosphate and a 5'-hydroxyl terminus.. Endonuclease that removes tRNA introns. Cleaves pre-tRNA at the 5'- and 3'-splice sites to release the intron. The products are an intron and two tRNA half-molecules bearing 2',3' cyclic phosphate and 5'-OH termini. Recognizes a pseudosymmetric substrate in which 2 bulged loops of 3 bases are separated by a stem of 4 bp. The chain is tRNA-splicing endonuclease from Pyrobaculum islandicum (strain DSM 4184 / JCM 9189 / GEO3).